Here is a 1088-residue protein sequence, read N- to C-terminus: Methionine S-methyltransferase (1088 aa).

Belongs to the class I-like SAM-binding methyltransferase superfamily. Homotetramer. In terms of tissue distribution, expressed in the shoot, scutellum, and aleurone cells but not in the root or endosperm.

Its subcellular location is the cytoplasm. It carries out the reaction L-methionine + S-adenosyl-L-methionine = S-methyl-L-methionine + S-adenosyl-L-homocysteine. Functionally, catalyzes the S-methylmethionine (SMM) biosynthesis from adenosyl-L-homocysteine (AdoMet) and methionine. SMM biosynthesis (by MMT1) and degradation (by HMT-1, HMT-2 and HMT-3) constitute the SMM cycle in plants, which is probably required to achieve short term control of AdoMet level. Also able to catalyze the selenium-methylmethionine (SeMM) from AdoMet and selenium-methionine (SeMet). May play a role in phoem sulfur transport; such function is however not essential. The sequence is that of Methionine S-methyltransferase (MMT1) from Hordeum vulgare (Barley).